The chain runs to 538 residues: Bifunctional purine biosynthesis protein PurH (538 aa).

The region spanning 6–158 (KHIPAPDLHR…KNHAYVATVV (153 aa)) is the MGS-like domain.

Belongs to the PurH family.

It carries out the reaction (6R)-10-formyltetrahydrofolate + 5-amino-1-(5-phospho-beta-D-ribosyl)imidazole-4-carboxamide = 5-formamido-1-(5-phospho-D-ribosyl)imidazole-4-carboxamide + (6S)-5,6,7,8-tetrahydrofolate. The catalysed reaction is IMP + H2O = 5-formamido-1-(5-phospho-D-ribosyl)imidazole-4-carboxamide. Its pathway is purine metabolism; IMP biosynthesis via de novo pathway; 5-formamido-1-(5-phospho-D-ribosyl)imidazole-4-carboxamide from 5-amino-1-(5-phospho-D-ribosyl)imidazole-4-carboxamide (10-formyl THF route): step 1/1. The protein operates within purine metabolism; IMP biosynthesis via de novo pathway; IMP from 5-formamido-1-(5-phospho-D-ribosyl)imidazole-4-carboxamide: step 1/1. The polypeptide is Bifunctional purine biosynthesis protein PurH (Brucella melitensis biotype 2 (strain ATCC 23457)).